We begin with the raw amino-acid sequence, 516 residues long: GMP synthase [glutamine-hydrolyzing] (516 aa).

One can recognise a Glutamine amidotransferase type-1 domain in the interval Lys6–Asp198. The active-site Nucleophile is Cys83. Residues His172 and Glu174 contribute to the active site. The 193-residue stretch at Trp199 to Arg391 folds into the GMPS ATP-PPase domain. Ser227–Thr233 is a binding site for ATP.

Homodimer.

The enzyme catalyses XMP + L-glutamine + ATP + H2O = GMP + L-glutamate + AMP + diphosphate + 2 H(+). It functions in the pathway purine metabolism; GMP biosynthesis; GMP from XMP (L-Gln route): step 1/1. Functionally, catalyzes the synthesis of GMP from XMP. The polypeptide is GMP synthase [glutamine-hydrolyzing] (Oleidesulfovibrio alaskensis (strain ATCC BAA-1058 / DSM 17464 / G20) (Desulfovibrio alaskensis)).